A 184-amino-acid polypeptide reads, in one-letter code: Elongation factor P (184 aa).

It belongs to the elongation factor P family.

It is found in the cytoplasm. It functions in the pathway protein biosynthesis; polypeptide chain elongation. Its function is as follows. Involved in peptide bond synthesis. Stimulates efficient translation and peptide-bond synthesis on native or reconstituted 70S ribosomes in vitro. Probably functions indirectly by altering the affinity of the ribosome for aminoacyl-tRNA, thus increasing their reactivity as acceptors for peptidyl transferase. The protein is Elongation factor P of Polaromonas naphthalenivorans (strain CJ2).